A 473-amino-acid polypeptide reads, in one-letter code: H(+)/Cl(-) exchange transporter ClcA (473 aa).

The Cytoplasmic portion of the chain corresponds to 1-32; that stretch reads MKTDTSTFLAQQIVRLRRRDQIRRLMQRDKTP. Residues 33–69 form a helical membrane-spanning segment; that stretch reads LAILFMAAVVGTLTGLVGVAFEKTVSWVQNMRIGALV. Topologically, residues 70–76 are periplasmic; sequence QVADHAF. A helical transmembrane segment spans residues 77-100; it reads LLWPLAFILSALLAMVGYFLVRKF. The Selectivity filter part_1 signature appears at 106 to 110; that stretch reads GSGIP. Position 107 (serine 107) interacts with chloride. The helical intramembrane region spans 109 to 116; it reads IPEIEGAL. At 117–123 the chain is on the cytoplasmic side; that stretch reads EELRPVR. A run of 2 helical transmembrane segments spans residues 124-141 and 148-166; these read WWRV…TLGA and EGPT…LDVF. Positions 146–150 match the Selectivity filter part_2 motif; it reads GREGP. The Cytoplasmic segment spans residues 167–176; that stretch reads RMRSAEARHT. 2 consecutive intramembrane regions (helical) follow at residues 177–189 and 193–201; these read LLAT…LSAA and PLAGILFII. Over 202–214 the chain is Cytoplasmic; it reads EEMRPQFRYNLIS. The helical transmembrane segment at 215 to 232 threads the bilayer; the sequence is IKAVFTGVIMSSIVFRIF. The Periplasmic segment spans residues 233 to 252; it reads NGEAPIIEVGKLSDAPVNTL. A helical transmembrane segment spans residues 253 to 281; that stretch reads WLYLILGIIFGCVGPVFNSLVLRTQDMFQ. Residues 282–287 lie on the Cytoplasmic side of the membrane; it reads RFHGGE. The chain crosses the membrane as a helical span at residues 288–309; that stretch reads IKKWVLMGGAIGGLCGILGLIE. Residues 310–329 are Periplasmic-facing; sequence PAAAGGGFNLIPIAAAGNFS. The next 2 helical transmembrane spans lie at 330-349 and 355-376; these read VGLL…LCFS and GIFA…MAAA. A Selectivity filter part_3 motif is present at residues 355 to 359; it reads GIFAP. Chloride is bound by residues isoleucine 356 and phenylalanine 357. Topologically, residues 377–386 are periplasmic; it reads VLFPQYHPEA. Residues 387–401 constitute an intramembrane region (helical); it reads GTFAIAGMGALMAAS. The note=Loop between two helices intramembrane region spans 402–404; the sequence is VRA. The segment at residues 405–416 is an intramembrane region (helical); the sequence is PLTGIVLVLEMT. Positions 417–421 form an intramembrane region, note=Loop between two helices; that stretch reads DNYQL. The chain crosses the membrane as a helical span at residues 422 to 438; it reads ILPMIITCLGATLLAQF. The Cytoplasmic segment spans residues 439–473; sequence LGGKPLYSTILARTLAKQDAEQAAKNQNAPAGENT. Tyrosine 445 is a binding site for chloride.

This sequence belongs to the chloride channel (TC 2.A.49) family. ClcA subfamily. In terms of assembly, homodimer.

The protein localises to the cell inner membrane. The catalysed reaction is 2 chloride(in) + H(+)(out) = 2 chloride(out) + H(+)(in). Functionally, proton-coupled chloride transporter. Functions as antiport system and exchanges two chloride ions for 1 proton. Probably acts as an electrical shunt for an outwardly-directed proton pump that is linked to amino acid decarboxylation, as part of the extreme acid resistance (XAR) response. The polypeptide is H(+)/Cl(-) exchange transporter ClcA (Salmonella paratyphi A (strain AKU_12601)).